Consider the following 503-residue polypeptide: Ribose import ATP-binding protein RbsA (503 aa).

2 ABC transporter domains span residues 10–246 and 256–500; these read LEVR…VGRD and VEPG…TGSE. 42 to 49 provides a ligand contact to ATP; it reads GENGAGKS.

This sequence belongs to the ABC transporter superfamily. Ribose importer (TC 3.A.1.2.1) family. In terms of assembly, the complex is composed of an ATP-binding protein (RbsA), two transmembrane proteins (RbsC) and a solute-binding protein (RbsB).

The protein localises to the cell membrane. The catalysed reaction is D-ribose(out) + ATP + H2O = D-ribose(in) + ADP + phosphate + H(+). In terms of biological role, part of the ABC transporter complex RbsABC involved in ribose import. Responsible for energy coupling to the transport system. The protein is Ribose import ATP-binding protein RbsA of Rhodococcus jostii (strain RHA1).